Reading from the N-terminus, the 205-residue chain is MQPRRIARELALLSIGQLPSNSDRLANQDLQAVMITAVRTLVAEVQEALETASAELKRGSDRILDSELKAIDVQSSRAMVTEAIDLTKTAVNRLGLAIDFPEFIQLANQQSVRDYTLDLIGAVHHHRDEIDQILETSLVDWQLHRLAHIDANLLRLAVAEMKYLDIPNQVAINESVELAKKYSAEEGHRFINGVLRRVTRQIAVP.

This sequence belongs to the NusB family.

Its function is as follows. Involved in transcription antitermination. Required for transcription of ribosomal RNA (rRNA) genes. Binds specifically to the boxA antiterminator sequence of the ribosomal RNA (rrn) operons. This is Transcription antitermination protein NusB from Acaryochloris marina (strain MBIC 11017).